We begin with the raw amino-acid sequence, 411 residues long: NADH-quinone oxidoreductase subunit D 2 (411 aa).

This sequence belongs to the complex I 49 kDa subunit family. As to quaternary structure, NDH-1 is composed of 14 different subunits. Subunits NuoB, C, D, E, F, and G constitute the peripheral sector of the complex.

It is found in the cell membrane. It carries out the reaction a quinone + NADH + 5 H(+)(in) = a quinol + NAD(+) + 4 H(+)(out). NDH-1 shuttles electrons from NADH, via FMN and iron-sulfur (Fe-S) centers, to quinones in the respiratory chain. The immediate electron acceptor for the enzyme in this species is believed to be ubiquinone. Couples the redox reaction to proton translocation (for every two electrons transferred, four hydrogen ions are translocated across the cytoplasmic membrane), and thus conserves the redox energy in a proton gradient. In Chloroflexus aurantiacus (strain ATCC 29366 / DSM 635 / J-10-fl), this protein is NADH-quinone oxidoreductase subunit D 2.